The primary structure comprises 88 residues: Mini zinc finger protein 3 (88 aa).

The segment at 26–72 (YVECQKNHAANIGGYAVDGCREFMASGGDDALTCAACGCHRNFHRRE) adopts a ZF-HD dimerization-type; degenerate zinc-finger fold.

In terms of assembly, homo- and heterodimers. Interacts with ZHD3, ZHD5, ZHD6, ZHD7, ZHD8, ZHD9, ZHD10 and ZHD13. In terms of tissue distribution, mostly expressed in roots, stems and flowers, present in seedlings and leaves, and weakly observed in inflorescence and siliques.

It localises to the cytoplasm. Its function is as follows. Inhibits zinc finger homeodomain (ZHD) transcription factors by interacting with them to prevent both their nuclear localization and their DNA-binding properties. Involved in integrating signals from multiple hormones by regulating the expression of specific genes. Promotes the formation of ectopic shoot meristems on leaf margins. This chain is Mini zinc finger protein 3 (MIF3), found in Arabidopsis thaliana (Mouse-ear cress).